We begin with the raw amino-acid sequence, 308 residues long: Elongation factor Ts (308 aa).

The tract at residues threonine 80–valine 83 is involved in Mg(2+) ion dislocation from EF-Tu.

It belongs to the EF-Ts family.

Its subcellular location is the cytoplasm. Functionally, associates with the EF-Tu.GDP complex and induces the exchange of GDP to GTP. It remains bound to the aminoacyl-tRNA.EF-Tu.GTP complex up to the GTP hydrolysis stage on the ribosome. This Verminephrobacter eiseniae (strain EF01-2) protein is Elongation factor Ts.